We begin with the raw amino-acid sequence, 113 residues long: T cell receptor alpha variable 8-1 (113 aa).

The signal sequence occupies residues 1–20 (MLLLLIPVLGMIFALRDARA). The region spanning 21–113 (QSVSQHNHHV…DTAEYFCAVN (93 aa)) is the Ig-like domain. A disulfide bridge connects residues Cys42 and Cys110. A glycan (N-linked (GlcNAc...) asparagine) is linked at Asn43.

In terms of assembly, alpha-beta TR is a heterodimer composed of an alpha and beta chain; disulfide-linked. The alpha-beta TR is associated with the transmembrane signaling CD3 coreceptor proteins to form the TR-CD3 (TcR or TCR). The assembly of alpha-beta TR heterodimers with CD3 occurs in the endoplasmic reticulum where a single alpha-beta TR heterodimer associates with one CD3D-CD3E heterodimer, one CD3G-CD3E heterodimer and one CD247 homodimer forming a stable octameric structure. CD3D-CD3E and CD3G-CD3E heterodimers preferentially associate with TR alpha and TR beta chains, respectively. The association of the CD247 homodimer is the last step of TcR assembly in the endoplasmic reticulum and is required for transport to the cell surface.

Its subcellular location is the cell membrane. Functionally, v region of the variable domain of T cell receptor (TR) alpha chain that participates in the antigen recognition. Alpha-beta T cell receptors are antigen specific receptors which are essential to the immune response and are present on the cell surface of T lymphocytes. Recognize peptide-major histocompatibility (MH) (pMH) complexes that are displayed by antigen presenting cells (APC), a prerequisite for efficient T cell adaptive immunity against pathogens. Binding of alpha-beta TR to pMH complex initiates TR-CD3 clustering on the cell surface and intracellular activation of LCK that phosphorylates the ITAM motifs of CD3G, CD3D, CD3E and CD247 enabling the recruitment of ZAP70. In turn ZAP70 phosphorylates LAT, which recruits numerous signaling molecules to form the LAT signalosome. The LAT signalosome propagates signal branching to three major signaling pathways, the calcium, the mitogen-activated protein kinase (MAPK) kinase and the nuclear factor NF-kappa-B (NF-kB) pathways, leading to the mobilization of transcription factors that are critical for gene expression and essential for T cell growth and differentiation. The T cell repertoire is generated in the thymus, by V-(D)-J rearrangement. This repertoire is then shaped by intrathymic selection events to generate a peripheral T cell pool of self-MH restricted, non-autoaggressive T cells. Post-thymic interaction of alpha-beta TR with the pMH complexes shapes TR structural and functional avidity. The chain is T cell receptor alpha variable 8-1 from Homo sapiens (Human).